Here is a 283-residue protein sequence, read N- to C-terminus: Pantothenate synthetase (283 aa).

Residue 30–37 participates in ATP binding; it reads MGYFHDGH. The active-site Proton donor is histidine 37. Glutamine 61 contacts (R)-pantoate. Residue glutamine 61 participates in beta-alanine binding. 147–150 contributes to the ATP binding site; the sequence is GSKD. Glutamine 153 is a binding site for (R)-pantoate. Residues valine 176 and 184–187 contribute to the ATP site; that span reads MSSR.

Belongs to the pantothenate synthetase family. In terms of assembly, homodimer.

It localises to the cytoplasm. The enzyme catalyses (R)-pantoate + beta-alanine + ATP = (R)-pantothenate + AMP + diphosphate + H(+). It participates in cofactor biosynthesis; (R)-pantothenate biosynthesis; (R)-pantothenate from (R)-pantoate and beta-alanine: step 1/1. Its function is as follows. Catalyzes the condensation of pantoate with beta-alanine in an ATP-dependent reaction via a pantoyl-adenylate intermediate. The polypeptide is Pantothenate synthetase (Desulforapulum autotrophicum (strain ATCC 43914 / DSM 3382 / VKM B-1955 / HRM2) (Desulfobacterium autotrophicum)).